The following is a 335-amino-acid chain: Pyridoxal 5'-phosphate synthase subunit PdxS (335 aa).

Asp30 is a binding site for D-ribose 5-phosphate. Residue Lys87 is the Schiff-base intermediate with D-ribose 5-phosphate of the active site. A D-ribose 5-phosphate-binding site is contributed by Gly159. Position 171 (Arg171) interacts with D-glyceraldehyde 3-phosphate. Residues Gly257 and 278-279 (GS) contribute to the D-ribose 5-phosphate site.

The protein belongs to the PdxS/SNZ family. In terms of assembly, in the presence of PdxT, forms a dodecamer of heterodimers.

The catalysed reaction is aldehydo-D-ribose 5-phosphate + D-glyceraldehyde 3-phosphate + L-glutamine = pyridoxal 5'-phosphate + L-glutamate + phosphate + 3 H2O + H(+). It functions in the pathway cofactor biosynthesis; pyridoxal 5'-phosphate biosynthesis. Its function is as follows. Catalyzes the formation of pyridoxal 5'-phosphate from ribose 5-phosphate (RBP), glyceraldehyde 3-phosphate (G3P) and ammonia. The ammonia is provided by the PdxT subunit. Can also use ribulose 5-phosphate and dihydroxyacetone phosphate as substrates, resulting from enzyme-catalyzed isomerization of RBP and G3P, respectively. The polypeptide is Pyridoxal 5'-phosphate synthase subunit PdxS (Pyrococcus furiosus (strain ATCC 43587 / DSM 3638 / JCM 8422 / Vc1)).